A 493-amino-acid polypeptide reads, in one-letter code: Neuronal acetylcholine receptor subunit alpha-6 (493 aa).

The signal sequence occupies residues 1-30; the sequence is MLNGWGRGDLRSGLCLWICGFLAFFKGSRG. Residues 31 to 240 lie on the Extracellular side of the membrane; the sequence is CVSEEQLFHT…TYSFYIRRLP (210 aa). Residues N54 and N171 are each glycosylated (N-linked (GlcNAc...) asparagine). 2 disulfides stabilise this stretch: C158-C172 and C222-C223. A run of 3 helical transmembrane segments spans residues 241 to 265, 272 to 290, and 306 to 327; these read MFYT…FYLP, VTLC…LVIT, and YLLF…VLNI. Residues 328 to 464 are Cytoplasmic-facing; it reads HYRTPATHTM…WKYMAMVVDR (137 aa). At S401 the chain carries Phosphoserine. Residues 465 to 484 traverse the membrane as a helical segment; sequence VFLWVFIIVCVFGTVGLFLQ.

The protein belongs to the ligand-gated ion channel (TC 1.A.9) family. Acetylcholine receptor (TC 1.A.9.1) subfamily. Alpha-6/CHRNA6 sub-subfamily. Neuronal AChR is composed of two different types of subunits: alpha and non-alpha (beta). CHRNA6/alpha-6 subunit can be combined to CHRNB2/beta-2 and CHRNA4/alpha-4 to give rise to functional receptors. Interacts with LYPD6. In terms of tissue distribution, predominantly expressed in only a few brain areas, including dopaminergic neurons, norepirephrine neurons and cells of the visual system.

The protein resides in the synaptic cell membrane. The catalysed reaction is Ca(2+)(in) = Ca(2+)(out). It carries out the reaction K(+)(in) = K(+)(out). The enzyme catalyses Na(+)(in) = Na(+)(out). With respect to regulation, activated by a myriad of ligands such as acetylcholine, cytisine and nicotine. CHRNA6 nAChR activity is inhibited by the antagonists alpha-conotoxin MII and PIA, a small disulfide-constrained peptides from cone snails. Component of neuronal acetylcholine receptors (nAChRs) that function as pentameric, ligand-gated cation channels with high calcium permeability among other activities. nAChRs are excitatory neurotrasnmitter receptors formed by a collection of nAChR subunits known to mediate synaptic transmission in the nervous system and the neuromuscular junction. Each nAchR subunit confers differential attributes to channel properties, including activation, deactivation and desensitization kinetics, pH sensitivity, cation permeability, and binding to allosteric modulators. CHRNA6 forms pentameric channels with CHRNB2 and CHRNA4 that exhibit high sensitivity to ACh and nicotine and are predominantly expressed in only a few brain areas, including dopaminergic neurons, norepirephrine neurons and cells of the visual system. nAChrs containing CHRNA6 subunits mediate endogenous cholinergic modulation of dopamine and gamma-aminobutyric acid (GABA) release in response to nicotine at nerve terminals. The chain is Neuronal acetylcholine receptor subunit alpha-6 (Chrna6) from Rattus norvegicus (Rat).